The primary structure comprises 456 residues: Bifunctional protein GlmU (456 aa).

The pyrophosphorylase stretch occupies residues 1-229 (MLNSAMSVVI…ISETDGVNNR (229 aa)). Residues 11–14 (LAAG), lysine 25, glutamine 76, 81–82 (GT), 103–105 (YGD), glycine 140, glutamate 154, asparagine 169, and asparagine 227 each bind UDP-N-acetyl-alpha-D-glucosamine. Aspartate 105 provides a ligand contact to Mg(2+). A Mg(2+)-binding site is contributed by asparagine 227. Residues 230–250 (LQLSRLERIYQAEQAEKLLLS) form a linker region. An N-acetyltransferase region spans residues 251-456 (GVMLRDPARF…QGWQRPVKKK (206 aa)). UDP-N-acetyl-alpha-D-glucosamine contacts are provided by arginine 333 and lysine 351. Histidine 363 acts as the Proton acceptor in catalysis. UDP-N-acetyl-alpha-D-glucosamine contacts are provided by tyrosine 366 and asparagine 377. Residues alanine 380, 386 to 387 (NY), serine 405, alanine 423, and arginine 440 contribute to the acetyl-CoA site.

In the N-terminal section; belongs to the N-acetylglucosamine-1-phosphate uridyltransferase family. The protein in the C-terminal section; belongs to the transferase hexapeptide repeat family. In terms of assembly, homotrimer. The cofactor is Mg(2+).

It localises to the cytoplasm. It carries out the reaction alpha-D-glucosamine 1-phosphate + acetyl-CoA = N-acetyl-alpha-D-glucosamine 1-phosphate + CoA + H(+). The enzyme catalyses N-acetyl-alpha-D-glucosamine 1-phosphate + UTP + H(+) = UDP-N-acetyl-alpha-D-glucosamine + diphosphate. Its pathway is nucleotide-sugar biosynthesis; UDP-N-acetyl-alpha-D-glucosamine biosynthesis; N-acetyl-alpha-D-glucosamine 1-phosphate from alpha-D-glucosamine 6-phosphate (route II): step 2/2. It functions in the pathway nucleotide-sugar biosynthesis; UDP-N-acetyl-alpha-D-glucosamine biosynthesis; UDP-N-acetyl-alpha-D-glucosamine from N-acetyl-alpha-D-glucosamine 1-phosphate: step 1/1. The protein operates within bacterial outer membrane biogenesis; LPS lipid A biosynthesis. Functionally, catalyzes the last two sequential reactions in the de novo biosynthetic pathway for UDP-N-acetylglucosamine (UDP-GlcNAc). The C-terminal domain catalyzes the transfer of acetyl group from acetyl coenzyme A to glucosamine-1-phosphate (GlcN-1-P) to produce N-acetylglucosamine-1-phosphate (GlcNAc-1-P), which is converted into UDP-GlcNAc by the transfer of uridine 5-monophosphate (from uridine 5-triphosphate), a reaction catalyzed by the N-terminal domain. In Salmonella choleraesuis (strain SC-B67), this protein is Bifunctional protein GlmU.